A 150-amino-acid polypeptide reads, in one-letter code: D-aminoacyl-tRNA deacylase (150 aa).

The short motif at 138–139 is the Gly-cisPro motif, important for rejection of L-amino acids element; sequence GP.

The protein belongs to the DTD family. As to quaternary structure, homodimer.

It is found in the cytoplasm. It carries out the reaction glycyl-tRNA(Ala) + H2O = tRNA(Ala) + glycine + H(+). The catalysed reaction is a D-aminoacyl-tRNA + H2O = a tRNA + a D-alpha-amino acid + H(+). An aminoacyl-tRNA editing enzyme that deacylates mischarged D-aminoacyl-tRNAs. Also deacylates mischarged glycyl-tRNA(Ala), protecting cells against glycine mischarging by AlaRS. Acts via tRNA-based rather than protein-based catalysis; rejects L-amino acids rather than detecting D-amino acids in the active site. By recycling D-aminoacyl-tRNA to D-amino acids and free tRNA molecules, this enzyme counteracts the toxicity associated with the formation of D-aminoacyl-tRNA entities in vivo and helps enforce protein L-homochirality. The chain is D-aminoacyl-tRNA deacylase from Bacteroides fragilis (strain YCH46).